The chain runs to 594 residues: Actin-histidine N-methyltransferase (594 aa).

The tract at residues 1 to 23 (MGKKSRVKTQKSGTGATASVSPK) is disordered. Residues 10 to 23 (QKSGTGATASVSPK) show a composition bias toward polar residues. S-adenosyl-L-methionine contacts are provided by residues Arg75, 104–106 (EGF), Arg254, 275–279 (DMCNH), and 325–327 (SGF). In terms of domain architecture, SET spans 94 to 314 (EGFEMVSFKE…AGEQIYIFYG (221 aa)). Residues 553–594 (INGENSIPNGTRLEKEDLNQEQSKRVTEDAKEPSDSTEEVKE) form a disordered region. Positions 564–594 (RLEKEDLNQEQSKRVTEDAKEPSDSTEEVKE) are enriched in basic and acidic residues.

Belongs to the class V-like SAM-binding methyltransferase superfamily. SETD3 actin-histidine methyltransferase family. In terms of assembly, interacts with MYOD1. In terms of processing, phosphorylated by GSK3B, which is required for recognition by the SCF(FBXW7) complex and subsequent degradation. Post-translationally, ubiquitinated by the SCF(FBXW7) complex following phosphorylation by GSK3B, leading to its degradation by the proteasome.

The protein localises to the cytoplasm. The protein resides in the nucleus. The enzyme catalyses L-histidyl-[protein] + S-adenosyl-L-methionine = N(tele)-methyl-L-histidyl-[protein] + S-adenosyl-L-homocysteine + H(+). Protein-histidine N-methyltransferase that specifically mediates 3-methylhistidine (tele-methylhistidine) methylation of actin at 'His-73'. Histidine methylation of actin is required for smooth muscle contraction of the laboring uterus during delivery. Does not have protein-lysine N-methyltransferase activity and probably only catalyzes histidine methylation of actin. The chain is Actin-histidine N-methyltransferase from Rhinolophus ferrumequinum (Greater horseshoe bat).